The sequence spans 267 residues: NAD kinase 2 (267 aa).

The active-site Proton acceptor is the D52. NAD(+) contacts are provided by residues D52 to A53, N124 to E125, R151, D153, T164 to S169, and A188.

Belongs to the NAD kinase family. The cofactor is a divalent metal cation.

It localises to the cytoplasm. It catalyses the reaction NAD(+) + ATP = ADP + NADP(+) + H(+). Functionally, involved in the regulation of the intracellular balance of NAD and NADP, and is a key enzyme in the biosynthesis of NADP. Catalyzes specifically the phosphorylation on 2'-hydroxyl of the adenosine moiety of NAD to yield NADP. The chain is NAD kinase 2 from Bacillus cereus (strain ATCC 14579 / DSM 31 / CCUG 7414 / JCM 2152 / NBRC 15305 / NCIMB 9373 / NCTC 2599 / NRRL B-3711).